A 78-amino-acid chain; its full sequence is Acyl carrier protein (78 aa).

In terms of domain architecture, Carrier spans 1–76; the sequence is MSLEERVKEI…DVINYLKEKV (76 aa). An O-(pantetheine 4'-phosphoryl)serine modification is found at Ser-36.

The protein belongs to the acyl carrier protein (ACP) family. In terms of processing, 4'-phosphopantetheine is transferred from CoA to a specific serine of apo-ACP by AcpS. This modification is essential for activity because fatty acids are bound in thioester linkage to the sulfhydryl of the prosthetic group.

It localises to the cytoplasm. It functions in the pathway lipid metabolism; fatty acid biosynthesis. In terms of biological role, carrier of the growing fatty acid chain in fatty acid biosynthesis. This is Acyl carrier protein from Aquifex aeolicus (strain VF5).